A 639-amino-acid polypeptide reads, in one-letter code: Chaperone protein HtpG (639 aa).

Residues 1-348 (MAQYEFQTEV…SEDLPLNVSR (348 aa)) are a; substrate-binding. Residues 349–565 (EILQQNRVLA…ENDPTVQMER (217 aa)) are b. The tract at residues 566–639 (LMRATGQTHK…KRVNRLLARG (74 aa)) is c.

It belongs to the heat shock protein 90 family. As to quaternary structure, homodimer.

The protein resides in the cytoplasm. Molecular chaperone. Has ATPase activity. This chain is Chaperone protein HtpG, found in Treponema pallidum (strain Nichols).